The following is a 308-amino-acid chain: Taste receptor type 2 member 41 (308 aa).

The Extracellular segment spans residues 1–7 (MLPTLSV). A helical membrane pass occupies residues 8–28 (FFMLTFVLLCFLGILANGFIV). Topologically, residues 29–60 (LMLSREWLLRGRLLPSDMILFSLGTSRFFQQC) are cytoplasmic. The chain crosses the membrane as a helical span at residues 61-81 (VGLVNSFYYFLHLVEYSGSLA). Residues 82–88 (RQLISLH) are Extracellular-facing. The chain crosses the membrane as a helical span at residues 89-109 (WDFLNSATFWFCTWLSVLFCI). Over 110 to 128 (KIANFSHPAFLWLKWRFPA) the chain is Cytoplasmic. A helical transmembrane segment spans residues 129-149 (LVPWFLLGSILVSVIVTLLFF). Over 150-186 (WGNHTIYQAFLRRKFTGNTTFKEWNRRLEIDYFMPLK) the chain is Extracellular. N-linked (GlcNAc...) asparagine glycans are attached at residues Asn-152 and Asn-167. The helical transmembrane segment at 187–207 (VVTMSIPCSLFLVSILLLISS) threads the bilayer. Over 208-239 (LRRHSLRMQHNTHSLQDPNVQAHSRALKSLIS) the chain is Cytoplasmic. The helical transmembrane segment at 240–260 (FLVLYAVSFVSMIIDATVFIS) threads the bilayer. Over 261-264 (SDNV) the chain is Extracellular. The chain crosses the membrane as a helical span at residues 265-285 (WYWPWQIILYFCMSVHPFILI). The Cytoplasmic portion of the chain corresponds to 286-308 (TNNLRFRGTFRQLLLLARGFWVA).

The protein belongs to the G-protein coupled receptor T2R family. As to expression, expressed in subsets of taste receptor cells of the tongue and palate epithelium and exclusively in gustducin-positive cells.

The protein localises to the membrane. Its function is as follows. Receptor that may play a role in the perception of bitterness and is gustducin-linked. May play a role in sensing the chemical composition of the gastrointestinal content. The activity of this receptor may stimulate alpha gustducin, mediate PLC-beta-2 activation and lead to the gating of TRPM5. This Mus musculus (Mouse) protein is Taste receptor type 2 member 41 (Tas2r41).